Reading from the N-terminus, the 190-residue chain is Elongation factor P 1 (190 aa).

It belongs to the elongation factor P family.

The protein resides in the cytoplasm. It participates in protein biosynthesis; polypeptide chain elongation. Its function is as follows. Involved in peptide bond synthesis. Stimulates efficient translation and peptide-bond synthesis on native or reconstituted 70S ribosomes in vitro. Probably functions indirectly by altering the affinity of the ribosome for aminoacyl-tRNA, thus increasing their reactivity as acceptors for peptidyl transferase. The protein is Elongation factor P 1 (efp1) of Lactobacillus johnsonii (strain CNCM I-12250 / La1 / NCC 533).